A 367-amino-acid polypeptide reads, in one-letter code: 3-dehydroquinate synthase (367 aa).

NAD(+) contacts are provided by residues 108–112 (GVIGD), 132–133 (TT), Lys-145, and Lys-154. The Zn(2+) site is built by Glu-187, His-249, and His-267.

It belongs to the sugar phosphate cyclases superfamily. Dehydroquinate synthase family. The cofactor is Co(2+). It depends on Zn(2+) as a cofactor. NAD(+) serves as cofactor.

It localises to the cytoplasm. The catalysed reaction is 7-phospho-2-dehydro-3-deoxy-D-arabino-heptonate = 3-dehydroquinate + phosphate. The protein operates within metabolic intermediate biosynthesis; chorismate biosynthesis; chorismate from D-erythrose 4-phosphate and phosphoenolpyruvate: step 2/7. Its function is as follows. Catalyzes the conversion of 3-deoxy-D-arabino-heptulosonate 7-phosphate (DAHP) to dehydroquinate (DHQ). The protein is 3-dehydroquinate synthase of Paracoccus denitrificans (strain Pd 1222).